The following is a 233-amino-acid chain: 2-C-methyl-D-erythritol 4-phosphate cytidylyltransferase (233 aa).

The protein belongs to the IspD/TarI cytidylyltransferase family. IspD subfamily.

The catalysed reaction is 2-C-methyl-D-erythritol 4-phosphate + CTP + H(+) = 4-CDP-2-C-methyl-D-erythritol + diphosphate. It functions in the pathway isoprenoid biosynthesis; isopentenyl diphosphate biosynthesis via DXP pathway; isopentenyl diphosphate from 1-deoxy-D-xylulose 5-phosphate: step 2/6. Catalyzes the formation of 4-diphosphocytidyl-2-C-methyl-D-erythritol from CTP and 2-C-methyl-D-erythritol 4-phosphate (MEP). The chain is 2-C-methyl-D-erythritol 4-phosphate cytidylyltransferase from Aromatoleum aromaticum (strain DSM 19018 / LMG 30748 / EbN1) (Azoarcus sp. (strain EbN1)).